Reading from the N-terminus, the 226-residue chain is Probable C4-dicarboxylate response regulator DctR (226 aa).

In terms of domain architecture, Response regulatory spans Lys-7–Lys-123. At Asp-58 the chain carries 4-aspartylphosphate. The segment at residues Ala-179–Asp-198 is a DNA-binding region (H-T-H motif).

In terms of processing, phosphorylated by DctS.

It localises to the cytoplasm. Member of the two-component regulatory system DctS/DctR. Essential for expression of dctP. The polypeptide is Probable C4-dicarboxylate response regulator DctR (dctR) (Bacillus subtilis (strain 168)).